Consider the following 468-residue polypeptide: Hepatocyte nuclear factor 3-alpha (468 aa).

Residues 169–260 constitute a DNA-binding region (fork-head); it reads AKPPYSYISL…GNMFENGCYL (92 aa). The segment at 251–288 is essential for DNA binding; it reads GNMFENGCYLRRQKRFKCEKQPGAGGGSGGGGSKGGPE. Residues 269 to 396 form a disordered region; that stretch reads EKQPGAGGGS…DPHYSFNHPF (128 aa). Residues 273-285 are compositionally biased toward gly residues; that stretch reads GAGGGSGGGGSKG. 2 positions are modified to phosphoserine: S303 and S327. Composition is skewed to low complexity over residues 318 to 328 and 347 to 365; these read GAPAPGPAASP and SPAS…ALAS.

As to quaternary structure, binds DNA as a monomer. Interacts with FOXA2. Interacts with NKX2-1. Interacts with HDAC7. Interacts with the histone H3-H4 heterodimer. Associates with nucleosomes containing histone H2A. Interacts with AR. Interacts with NR0B2. Restricted mainly to endoderm-derived tissues (lung, liver, stomach, and small intestine). Expressed in the prostate.

Its subcellular location is the nucleus. Transcription factor that is involved in embryonic development, establishment of tissue-specific gene expression and regulation of gene expression in differentiated tissues. Is thought to act as a 'pioneer' factor opening the compacted chromatin for other proteins through interactions with nucleosomal core histones and thereby replacing linker histones at target enhancer and/or promoter sites. Binds DNA with the consensus sequence 5'-[AC]A[AT]T[AG]TT[GT][AG][CT]T[CT]-3'. Proposed to play a role in translating the epigenetic signatures into cell type-specific enhancer-driven transcriptional programs. Involved in the development of multiple endoderm-derived organ systems such as the liver, pancreas, lungs and prostate; FOXA1 and FOXA2 seem to have at least in part redundant roles. Plays a role in prostate morphogenesis and epithelial cell differentiation. FOXA1 and FOXA2 are essential for hepatic specification. FOXA1 and FOXA2 are required for morphogenesis and cell differentiation during formation of the lung. FOXA1 and FOXA2 are involved in bile duct formation; they positively regulate the binding of glucocorticoid receptor/NR3C1 to the IL6 promoter. FOXA1 and FOXA2 regulate multiple phases of midbrain dopaminergic neuron development; they regulate expression of NEUROG2 at the beginning of mDA neurogenesis and of NR4A2 and EN1 in immature mDA neurons. Modulates the transcriptional activity of nuclear hormone receptors. Is involved in ESR1-mediated transcription. Inhibits NKX2-1-mediated transcription from the SFTPC promoter in lung epithel independently from DNA-binding. Involved in regulation of apoptosis. Involved in cell cycle regulation. Originally described as a transcription activator for a number of liver genes such as AFP, albumin, tyrosine aminotransferase, PEPCK, etc. Interacts with the cis-acting regulatory regions of these genes. Involved in glucose homeostasis; activates the GCG promoter. This chain is Hepatocyte nuclear factor 3-alpha (Foxa1), found in Mus musculus (Mouse).